The sequence spans 110 residues: DNA-binding protein PAE3044 (110 aa).

This sequence belongs to the PDCD5 family.

This chain is DNA-binding protein PAE3044, found in Pyrobaculum aerophilum (strain ATCC 51768 / DSM 7523 / JCM 9630 / CIP 104966 / NBRC 100827 / IM2).